The sequence spans 657 residues: Glycogen debranching enzyme (657 aa).

D336 serves as the catalytic Nucleophile. Catalysis depends on E371, which acts as the Proton donor. Positions 458–467 (NEANGEENRD) are enriched in basic and acidic residues. The tract at residues 458 to 479 (NEANGEENRDGTNNNYSNNHGK) is disordered.

Belongs to the glycosyl hydrolase 13 family.

It carries out the reaction Hydrolysis of (1-&gt;6)-alpha-D-glucosidic linkages to branches with degrees of polymerization of three or four glucose residues in limit dextrin.. It participates in glycan degradation; glycogen degradation. Functionally, removes maltotriose and maltotetraose chains that are attached by 1,6-alpha-linkage to the limit dextrin main chain, generating a debranched limit dextrin. This chain is Glycogen debranching enzyme, found in Escherichia coli O8 (strain IAI1).